The primary structure comprises 228 residues: ATP-dependent dethiobiotin synthetase BioD (228 aa).

Position 12 to 17 (12 to 17) interacts with ATP; the sequence is DVGKTY. T16 contacts Mg(2+). The active site involves K37. ATP contacts are provided by residues D53, 114–117, 174–175, 203–205, and N210; these read EGMG, ND, and PFI. D53 and E114 together coordinate Mg(2+).

The protein belongs to the dethiobiotin synthetase family. In terms of assembly, homodimer. Requires Mg(2+) as cofactor.

It is found in the cytoplasm. It catalyses the reaction (7R,8S)-7,8-diammoniononanoate + CO2 + ATP = (4R,5S)-dethiobiotin + ADP + phosphate + 3 H(+). The protein operates within cofactor biosynthesis; biotin biosynthesis; biotin from 7,8-diaminononanoate: step 1/2. Catalyzes a mechanistically unusual reaction, the ATP-dependent insertion of CO2 between the N7 and N8 nitrogen atoms of 7,8-diaminopelargonic acid (DAPA, also called 7,8-diammoniononanoate) to form a ureido ring. This Nitrosopumilus maritimus (strain SCM1) protein is ATP-dependent dethiobiotin synthetase BioD.